We begin with the raw amino-acid sequence, 218 residues long: MDAVVKLFKEQAETEAQRQMPVHRPVDAPRPSRAEAEAAVRTLLAYIGEDPHREGLQETPARVIRSYDEIYGGYALSPDDVLDRTFGEIGSFDDFVLLKDIPFTSHCEHHMVPFMGKAHVAYFPVERVVGLSKIARLVDLYARRLQTQEHLTSQITTALDEALKPRGVAVMIEAEHMCMSMRGILKPGVTTLTSQFTGAFRDDPAEQVRFITMLRGLR.

Cysteine 107, histidine 110, and cysteine 178 together coordinate Zn(2+).

It belongs to the GTP cyclohydrolase I family. In terms of assembly, homomer.

It carries out the reaction GTP + H2O = 7,8-dihydroneopterin 3'-triphosphate + formate + H(+). It participates in cofactor biosynthesis; 7,8-dihydroneopterin triphosphate biosynthesis; 7,8-dihydroneopterin triphosphate from GTP: step 1/1. The protein is GTP cyclohydrolase 1 of Azorhizobium caulinodans (strain ATCC 43989 / DSM 5975 / JCM 20966 / LMG 6465 / NBRC 14845 / NCIMB 13405 / ORS 571).